Consider the following 180-residue polypeptide: CASP-like protein XL3 (180 aa).

The Cytoplasmic portion of the chain corresponds to 1 to 7; the sequence is MELSIQK. The helical transmembrane segment at 8-28 threads the bilayer; the sequence is IEALIRLSTIVMLVLTACLIG. The Extracellular portion of the chain corresponds to 29-49; that stretch reads LDSQTKVIFYVQKKASFKDLR. Residues 50-70 traverse the membrane as a helical segment; sequence ALVGLLYITSLAAAYNLLQLC. Residues 71-98 are Cytoplasmic-facing; it reads CSSFSASYKGTSLQSYAYLAWLRYILDQ. Residues 99–119 form a helical membrane-spanning segment; sequence AVVYAVFAGNLAALEHSFLVL. The Extracellular portion of the chain corresponds to 120 to 140; that stretch reads TGEENFQWLKWCNKYTRFCTQ. The chain crosses the membrane as a helical span at residues 141 to 161; that stretch reads IGGSLLCGFVASLLMFSIASI. At 162-180 the chain is on the cytoplasmic side; it reads SAFNLFRQYSPTKFMHLKL.

Belongs to the Casparian strip membrane proteins (CASP) family. In terms of assembly, homodimer and heterodimers.

It localises to the cell membrane. The protein is CASP-like protein XL3 (XL3) of Gossypium hirsutum (Upland cotton).